The sequence spans 31 residues: Cycloviolacin-O19 (31 aa).

The segment at residues 1–31 (GTLPCGESCVWIPCISSVVGCSCKSKVCYKD) is a cross-link (cyclopeptide (Gly-Asp)). 3 disulfide bridges follow: C5–C21, C9–C23, and C14–C28.

In terms of processing, this is a cyclic peptide. In terms of tissue distribution, expressed in petioles and runners but not in leaves, petals and roots (at protein level).

Functionally, probably participates in a plant defense mechanism. The sequence is that of Cycloviolacin-O19 from Viola odorata (Sweet violet).